The sequence spans 406 residues: Cysteine desulfurase (406 aa).

Residue Lys226 is modified to N6-(pyridoxal phosphate)lysine. Residue Cys364 is the Cysteine persulfide intermediate of the active site.

Belongs to the class-V pyridoxal-phosphate-dependent aminotransferase family. Csd subfamily. As to quaternary structure, homodimer. Interacts with SufE and the SufBCD complex composed of SufB, SufC and SufD. The interaction with SufE is required to mediate the direct transfer of the sulfur atom from the S-sulfanylcysteine. The cofactor is pyridoxal 5'-phosphate.

The protein localises to the cytoplasm. It catalyses the reaction (sulfur carrier)-H + L-cysteine = (sulfur carrier)-SH + L-alanine. The catalysed reaction is L-selenocysteine + AH2 = hydrogenselenide + L-alanine + A + H(+). Its pathway is cofactor biosynthesis; iron-sulfur cluster biosynthesis. Cysteine desulfurases mobilize the sulfur from L-cysteine to yield L-alanine, an essential step in sulfur metabolism for biosynthesis of a variety of sulfur-containing biomolecules. Component of the suf operon, which is activated and required under specific conditions such as oxidative stress and iron limitation. Acts as a potent selenocysteine lyase in vitro, that mobilizes selenium from L-selenocysteine. Selenocysteine lyase activity is however unsure in vivo. The chain is Cysteine desulfurase (sufS) from Shigella flexneri.